The primary structure comprises 56 residues: Large ribosomal subunit protein eL20 (56 aa).

Positions 1-24 (MSTYTVRGSFPARDGPQQFEKEVE) are disordered.

The protein belongs to the eukaryotic ribosomal protein eL20 family. In terms of assembly, part of the 50S ribosomal subunit. Binds 23S rRNA.

This Haloarcula marismortui (strain ATCC 43049 / DSM 3752 / JCM 8966 / VKM B-1809) (Halobacterium marismortui) protein is Large ribosomal subunit protein eL20.